The primary structure comprises 268 residues: L-proline trans-4-hydroxylase (268 aa).

Positions 113, 115, and 218 each coordinate Fe cation.

It belongs to the PhyH family. Monomer. It depends on Fe(2+) as a cofactor.

It catalyses the reaction L-proline + 2-oxoglutarate + O2 = trans-4-hydroxy-L-proline + succinate + CO2. It participates in antibiotic biosynthesis. With respect to regulation, competitively inhibited by pyridine-2,4-dicarboxylate. Inhibited by diethyl pyrocarbonate (DEPC), 3,4-dihydroxybenzoate, pyridine-2,5-dicarboxylate, alpha,alpha'-dipyridyl, and some metal ions such as Co(2+) and Zn(2+). Involved in the biosynthesis of the peptidolactone antibiotic etamycin (viridogrisein). Catalyzes the hydroxylation of free L-proline at the C-4 position to yield trans-4-hydroxy-L-proline. The chain is L-proline trans-4-hydroxylase from Streptomyces griseoviridis.